The following is a 237-amino-acid chain: Phosphatidylserine decarboxylase proenzyme (237 aa).

The Schiff-base intermediate with substrate; via pyruvic acid role is filled by Ser206. Position 206 is a pyruvic acid (Ser); by autocatalysis (Ser206).

The protein belongs to the phosphatidylserine decarboxylase family. PSD-A subfamily. Heterodimer of a large membrane-associated beta subunit and a small pyruvoyl-containing alpha subunit. The cofactor is pyruvate. Post-translationally, is synthesized initially as an inactive proenzyme. Formation of the active enzyme involves a self-maturation process in which the active site pyruvoyl group is generated from an internal serine residue via an autocatalytic post-translational modification. Two non-identical subunits are generated from the proenzyme in this reaction, and the pyruvate is formed at the N-terminus of the alpha chain, which is derived from the carboxyl end of the proenzyme. The post-translation cleavage follows an unusual pathway, termed non-hydrolytic serinolysis, in which the side chain hydroxyl group of the serine supplies its oxygen atom to form the C-terminus of the beta chain, while the remainder of the serine residue undergoes an oxidative deamination to produce ammonia and the pyruvoyl prosthetic group on the alpha chain.

It is found in the cell membrane. It carries out the reaction a 1,2-diacyl-sn-glycero-3-phospho-L-serine + H(+) = a 1,2-diacyl-sn-glycero-3-phosphoethanolamine + CO2. It participates in phospholipid metabolism; phosphatidylethanolamine biosynthesis; phosphatidylethanolamine from CDP-diacylglycerol: step 2/2. Catalyzes the formation of phosphatidylethanolamine (PtdEtn) from phosphatidylserine (PtdSer). This chain is Phosphatidylserine decarboxylase proenzyme, found in Mycobacteroides abscessus (strain ATCC 19977 / DSM 44196 / CCUG 20993 / CIP 104536 / JCM 13569 / NCTC 13031 / TMC 1543 / L948) (Mycobacterium abscessus).